Consider the following 523-residue polypeptide: Melanoma-associated antigen E2 (523 aa).

MAGE domains lie at 88-288 and 311-502; these read LEDR…YNKA and MNDK…YREA.

The polypeptide is Melanoma-associated antigen E2 (MAGEE2) (Homo sapiens (Human)).